The primary structure comprises 682 residues: Potassium-transporting ATPase ATP-binding subunit (682 aa).

The next 5 membrane-spanning stretches (helical) occupy residues 15-35 (AALF…AKLA), 42-62 (SPVM…TASG), 66-86 (AGFG…GNFA), 233-253 (LTFL…GVTL), and 257-277 (LLIA…LPAI). Catalysis depends on D310, which acts as the 4-aspartylphosphate intermediate. ATP contacts are provided by residues D347, E351, 377 to 384 (FTAQTRMS), and K395. 2 residues coordinate Mg(2+): D518 and D522. 3 helical membrane-spanning segments follow: residues 588 to 608 (FAIL…LNVM), 616 to 636 (AVLA…PLAL), and 662 to 682 (VLLP…VLGA).

It belongs to the cation transport ATPase (P-type) (TC 3.A.3) family. Type IA subfamily. The system is composed of three essential subunits: KdpA, KdpB and KdpC.

It localises to the cell inner membrane. It catalyses the reaction K(+)(out) + ATP + H2O = K(+)(in) + ADP + phosphate + H(+). Its function is as follows. Part of the high-affinity ATP-driven potassium transport (or Kdp) system, which catalyzes the hydrolysis of ATP coupled with the electrogenic transport of potassium into the cytoplasm. This subunit is responsible for energy coupling to the transport system and for the release of the potassium ions to the cytoplasm. The polypeptide is Potassium-transporting ATPase ATP-binding subunit (Xanthomonas axonopodis pv. citri (strain 306)).